The primary structure comprises 81 residues: Photosystem I iron-sulfur center (81 aa).

2 consecutive 4Fe-4S ferredoxin-type domains span residues 2–31 (AHSV…MIPW) and 39–68 (IASA…VRVY). The [4Fe-4S] cluster site is built by C11, C14, C17, C21, C48, C51, C54, and C58.

As to quaternary structure, the eukaryotic PSI reaction center is composed of at least 11 subunits. The cofactor is [4Fe-4S] cluster.

Its subcellular location is the plastid. It is found in the chloroplast thylakoid membrane. It carries out the reaction reduced [plastocyanin] + hnu + oxidized [2Fe-2S]-[ferredoxin] = oxidized [plastocyanin] + reduced [2Fe-2S]-[ferredoxin]. In terms of biological role, apoprotein for the two 4Fe-4S centers FA and FB of photosystem I (PSI); essential for photochemical activity. FB is the terminal electron acceptor of PSI, donating electrons to ferredoxin. The C-terminus interacts with PsaA/B/D and helps assemble the protein into the PSI complex. Required for binding of PsaD and PsaE to PSI. PSI is a plastocyanin-ferredoxin oxidoreductase, converting photonic excitation into a charge separation, which transfers an electron from the donor P700 chlorophyll pair to the spectroscopically characterized acceptors A0, A1, FX, FA and FB in turn. The protein is Photosystem I iron-sulfur center of Staurastrum punctulatum (Green alga).